Consider the following 416-residue polypeptide: Formyl-CoA:oxalate CoA-transferase (416 aa).

CoA is bound by residues 17-18 (QS), Arg-38, 72-75 (LNTK), 96-98 (NFH), His-104, and 137-140 (KAYE). The active-site Nucleophile is Asp-169. 248 to 250 (GGQ) contributes to the substrate binding site. A CoA-binding site is contributed by 273–275 (QEQ).

It belongs to the CoA-transferase III family. Frc subfamily. In terms of assembly, homodimer.

The enzyme catalyses formyl-CoA + oxalate = oxalyl-CoA + formate. Its pathway is metabolic intermediate degradation; oxalate degradation; CO(2) and formate from oxalate: step 1/2. Its function is as follows. Involved in the catabolism of oxalate and in the adapatation to low pH via the induction of the oxalate-dependent acid tolerance response (ATR). Catalyzes the transfer of the CoA moiety from formyl-CoA to oxalate. The protein is Formyl-CoA:oxalate CoA-transferase of Escherichia coli O6:H1 (strain CFT073 / ATCC 700928 / UPEC).